Here is a 583-residue protein sequence, read N- to C-terminus: Aspartate--tRNA ligase (583 aa).

Glu174 provides a ligand contact to L-aspartate. The interval 198 to 201 (QTFK) is aspartate. Arg220 contributes to the L-aspartate binding site. Residues 220–222 (RDE) and Gln229 contribute to the ATP site. His445 provides a ligand contact to L-aspartate. Glu479 contributes to the ATP binding site. Arg486 contacts L-aspartate. Residue 531-534 (GLDR) coordinates ATP.

Belongs to the class-II aminoacyl-tRNA synthetase family. Type 1 subfamily. Homodimer.

The protein resides in the cytoplasm. The catalysed reaction is tRNA(Asp) + L-aspartate + ATP = L-aspartyl-tRNA(Asp) + AMP + diphosphate. Functionally, catalyzes the attachment of L-aspartate to tRNA(Asp) in a two-step reaction: L-aspartate is first activated by ATP to form Asp-AMP and then transferred to the acceptor end of tRNA(Asp). In Flavobacterium psychrophilum (strain ATCC 49511 / DSM 21280 / CIP 103535 / JIP02/86), this protein is Aspartate--tRNA ligase.